The primary structure comprises 381 residues: DNA replication and repair protein RecF (381 aa).

30–37 (GENAQGKT) lines the ATP pocket.

Belongs to the RecF family.

The protein resides in the cytoplasm. The RecF protein is involved in DNA metabolism; it is required for DNA replication and normal SOS inducibility. RecF binds preferentially to single-stranded, linear DNA. It also seems to bind ATP. In Lactobacillus delbrueckii subsp. bulgaricus (strain ATCC BAA-365 / Lb-18), this protein is DNA replication and repair protein RecF.